Here is a 281-residue protein sequence, read N- to C-terminus: Tumor necrosis factor ligand superfamily member 6 (281 aa).

Residues 1 to 80 are Cytoplasmic-facing; sequence MQQPFNYPYP…LKKRGNHSTG (80 aa). The disordered stretch occupies residues 20-71; the sequence is SSPWAPPGTVLPCPTSVPRRPGQRRPPPPPPPPPLPPPPPPPPLPPLPLPPL. Residues 43–70 show a composition bias toward pro residues; it reads RRPPPPPPPPPLPPPPPPPPLPPLPLPP. The helical; Signal-anchor for type II membrane protein transmembrane segment at 81–102 threads the bilayer; sequence LCLLVMFFMVLVALVGLGLGMF. The Extracellular portion of the chain corresponds to 103-281; it reads QLFHLQKELA…SQTFFGLYKL (179 aa). Residues 118–128 are compositionally biased toward polar residues; the sequence is TSQMHTASSLE. Positions 118-142 are disordered; sequence TSQMHTASSLEKQIGHPSPPPEKKE. A THD domain is found at 145–281; the sequence is KVAHLTGKSN…SQTFFGLYKL (137 aa). An N-linked (GlcNAc...) asparagine glycan is attached at asparagine 184. The cysteines at positions 202 and 233 are disulfide-linked. Asparagine 250 and asparagine 260 each carry an N-linked (GlcNAc...) asparagine glycan.

Belongs to the tumor necrosis factor family. As to quaternary structure, homotrimer. Interacts with ARHGAP9, BAIAP2L1, BTK, CACNB3, CACNB4, CRK, DLG2, DNMBP, DOCK4, EPS8L3, FGR, FYB1, FYN, HCK, ITK, ITSN2, KALRN, LYN, MACC1, MIA, MPP4, MYO15A, NCF1, NCK1, NCK2, NCKIPSD, OSTF1, PIK3R1, PSTPIP1, RIMBP3C, SAMSN1, SH3GL3, SH3PXD2B, SH3PXD2A, SH3RF2, SKAP2, SNX33, SNX9, SORBS3, SPTA1, SRC, SRGAP1, SRGAP2, SRGAP3, TEC, TJP3 and YES1. The soluble form derives from the membrane form by proteolytic processing. The membrane-bound form undergoes two successive intramembrane proteolytic cleavages. The first one is processed by ADAM10 producing an N-terminal fragment, which lacks the receptor-binding extracellular domain. This ADAM10-processed FasL (FasL APL) remnant form is still membrane anchored and further processed by SPPL2A that liberates the FasL intracellular domain (FasL ICD). FasL shedding by ADAM10 is a prerequisite for subsequent intramembrane cleavage by SPPL2A in T-cells. In terms of processing, N-glycosylated. Glycosylation enhances apoptotic activity. Post-translationally, phosphorylated by FGR on tyrosine residues; this is required for ubiquitination and subsequent internalization. Monoubiquitinated.

The protein resides in the cell membrane. The protein localises to the cytoplasmic vesicle lumen. It is found in the lysosome lumen. Its subcellular location is the secreted. It localises to the nucleus. Cytokine that binds to TNFRSF6/FAS, a receptor that transduces the apoptotic signal into cells. Involved in cytotoxic T-cell-mediated apoptosis, natural killer cell-mediated apoptosis and in T-cell development. Initiates fratricidal/suicidal activation-induced cell death (AICD) in antigen-activated T-cells contributing to the termination of immune responses. TNFRSF6/FAS-mediated apoptosis also has a role in the induction of peripheral tolerance. Binds to TNFRSF6B/DcR3, a decoy receptor that blocks apoptosis. In terms of biological role, induces FAS-mediated activation of NF-kappa-B, initiating non-apoptotic signaling pathways. Can induce apoptosis but does not appear to be essential for this process. Its function is as follows. Cytoplasmic form induces gene transcription inhibition. The polypeptide is Tumor necrosis factor ligand superfamily member 6 (FASLG) (Homo sapiens (Human)).